Reading from the N-terminus, the 115-residue chain is Ribosome-binding factor A (115 aa).

It belongs to the RbfA family. Monomer. Binds 30S ribosomal subunits, but not 50S ribosomal subunits or 70S ribosomes.

The protein localises to the cytoplasm. One of several proteins that assist in the late maturation steps of the functional core of the 30S ribosomal subunit. Associates with free 30S ribosomal subunits (but not with 30S subunits that are part of 70S ribosomes or polysomes). Required for efficient processing of 16S rRNA. May interact with the 5'-terminal helix region of 16S rRNA. The sequence is that of Ribosome-binding factor A from Staphylococcus carnosus (strain TM300).